Reading from the N-terminus, the 432-residue chain is Enolase (432 aa).

Q167 contacts (2R)-2-phosphoglycerate. E209 acts as the Proton donor in catalysis. The Mg(2+) site is built by D246, E291, and D318. 4 residues coordinate (2R)-2-phosphoglycerate: K343, R372, S373, and K394. The Proton acceptor role is filled by K343.

It belongs to the enolase family. In terms of assembly, component of the RNA degradosome, a multiprotein complex involved in RNA processing and mRNA degradation. The cofactor is Mg(2+).

It is found in the cytoplasm. The protein resides in the secreted. Its subcellular location is the cell surface. The catalysed reaction is (2R)-2-phosphoglycerate = phosphoenolpyruvate + H2O. Its pathway is carbohydrate degradation; glycolysis; pyruvate from D-glyceraldehyde 3-phosphate: step 4/5. Its function is as follows. Catalyzes the reversible conversion of 2-phosphoglycerate (2-PG) into phosphoenolpyruvate (PEP). It is essential for the degradation of carbohydrates via glycolysis. The polypeptide is Enolase (Colwellia psychrerythraea (strain 34H / ATCC BAA-681) (Vibrio psychroerythus)).